A 652-amino-acid chain; its full sequence is Carboxypeptidase Z (652 aa).

The signal sequence occupies residues 1–20; sequence MPTTPLLLAALAALAALAVA. Positions 41–163 constitute an FZ domain; that stretch reads THSATCVDLH…APEEEGCYDP (123 aa). Intrachain disulfides connect Cys46–Cys112, Cys54–Cys105, Cys96–Cys132, Cys121–Cys160, and Cys125–Cys149. Asn60 carries N-linked (GlcNAc...) asparagine glycosylation. The 317-residue stretch at 189–505 folds into the Peptidase M14 domain; it reads AHHSYAQMVR…EPLLNFLEMV (317 aa). His251 and Glu254 together coordinate Zn(2+). N-linked (GlcNAc...) asparagine glycosylation occurs at Asn284. His383 provides a ligand contact to Zn(2+). Glu475 functions as the Proton donor/acceptor in the catalytic mechanism. Positions 594 to 628 are disordered; it reads FLPGPSRALPRSLDPQGAPAQLDFEPPRARRQPAS.

Belongs to the peptidase M14 family. It depends on Zn(2+) as a cofactor. Abundantly expressed in the placenta, with low to moderate levels in the brain, lung, thymus and kidney.

The protein localises to the secreted. The protein resides in the extracellular space. It is found in the extracellular matrix. Its activity is regulated as follows. Inhibited by 2-mercaptomethyl-3-guanidinoethylthiopropanoic acid (MGTA) and guanidinoethylmercaptosuccinic acid (GEMSA). Inhibited by chelating agents such as EDTA and EGTA. Functionally, cleaves substrates with C-terminal arginine residues. Probably modulates the Wnt signaling pathway, by cleaving some undefined protein. May play a role in cleavage during prohormone processing. This is Carboxypeptidase Z (Cpz) from Rattus norvegicus (Rat).